The chain runs to 165 residues: SsrA-binding protein (165 aa).

Positions 141–165 are disordered; sequence KLHDKRQEEKRKQADREVKSALARY. Residues 145–159 show a composition bias toward basic and acidic residues; that stretch reads KRQEEKRKQADREVK.

Belongs to the SmpB family.

Its subcellular location is the cytoplasm. Its function is as follows. Required for rescue of stalled ribosomes mediated by trans-translation. Binds to transfer-messenger RNA (tmRNA), required for stable association of tmRNA with ribosomes. tmRNA and SmpB together mimic tRNA shape, replacing the anticodon stem-loop with SmpB. tmRNA is encoded by the ssrA gene; the 2 termini fold to resemble tRNA(Ala) and it encodes a 'tag peptide', a short internal open reading frame. During trans-translation Ala-aminoacylated tmRNA acts like a tRNA, entering the A-site of stalled ribosomes, displacing the stalled mRNA. The ribosome then switches to translate the ORF on the tmRNA; the nascent peptide is terminated with the 'tag peptide' encoded by the tmRNA and targeted for degradation. The ribosome is freed to recommence translation, which seems to be the essential function of trans-translation. In Prochlorococcus marinus (strain MIT 9303), this protein is SsrA-binding protein.